Reading from the N-terminus, the 459-residue chain is Argininosuccinate lyase (459 aa).

This sequence belongs to the lyase 1 family. Argininosuccinate lyase subfamily.

Its subcellular location is the cytoplasm. It catalyses the reaction 2-(N(omega)-L-arginino)succinate = fumarate + L-arginine. The protein operates within amino-acid biosynthesis; L-arginine biosynthesis; L-arginine from L-ornithine and carbamoyl phosphate: step 3/3. The protein is Argininosuccinate lyase of Desulforudis audaxviator (strain MP104C).